Reading from the N-terminus, the 110-residue chain is Putative UPF0377 protein YKL223W (110 aa).

The protein belongs to the UPF0377 family.

This is Putative UPF0377 protein YKL223W from Saccharomyces cerevisiae (strain ATCC 204508 / S288c) (Baker's yeast).